The chain runs to 475 residues: MAAGALRGLPVAGGGESSESEDDGWEIGYLDRTSQKLKGLLPIEEKKEKFKKAMTIGDVSLVQELLDSGISVDSTFQYGWTPLMYAASVANAELVRVLLDRGANASFEKDKQSILITACSAHGSEELILKCVELLLSRNADPNVACRRLMTPIMYAARDGHTQVVALLVAHGAEVNTQDENGYTALTWAARQGHKNIVLKLLELGANKMLQTKDGKMPSEIAKRNKHHEIFNLLSFTLNPLEGKLQQLTKEDTICKILTTDSDREKDHIFSSYTAFGDLEVFLHGLGLEHMTDLLKERDITLRHLLTMREDEFTKNGITSKDQQKILAALKELQVEEIQFGELSEETKLEISGDEFLNFLLKLNKQCGHLITAVQNVITELPVNSQKITLEWASPRNFTSVCEELVNNVEDLSEEVCKLKDLIQKLQNERENDPTHIQLREEVSTWNSRILKRTAIAVCGFGFLLFICKLTFQRK.

A disordered region spans residues 1–25 (MAAGALRGLPVAGGGESSESEDDGW). 3 positions are modified to phosphoserine: S17, S18, and S20. 6 ANK repeats span residues 45–74 (EKKE…SVDS), 78–107 (YGWT…NASF), 110–144 (DKQS…DPNV), 148–177 (RLMT…EVNT), 181–210 (NGYT…NKML), and 214–243 (DGKM…PLEG). Residues 272-334 (SYTAFGDLEV…KILAALKELQ (63 aa)) form the SAM domain.

Interacts with DDX4, PIWIL1, RANBP9 and TDRD1.

It localises to the cytoplasm. Plays a central role during spermatogenesis by repressing transposable elements and preventing their mobilization, which is essential for the germline integrity. Acts via the piRNA metabolic process, which mediates the repression of transposable elements during meiosis by forming complexes composed of piRNAs and Piwi proteins and governs the methylation and subsequent repression of transposons. Its association with pi-bodies suggests a participation in the primary piRNAs metabolic process. Required prior to the pachytene stage to facilitate the production of multiple types of piRNAs, including those associated with repeats involved in the regulation of retrotransposons. May act by mediating protein-protein interactions during germ cell maturation. The sequence is that of Ankyrin repeat, SAM and basic leucine zipper domain-containing protein 1 (ASZ1) from Nomascus leucogenys (Northern white-cheeked gibbon).